A 216-amino-acid polypeptide reads, in one-letter code: uncharacterized protein (216 aa).

Transmembrane regions (helical) follow at residues 5-27 (ISLILVIIFPYISLGLSARIAFS), 98-120 (FLSFFFPSVYVLSIIWIAGVFLL), 125-147 (VLIWSGIFNSLLLLFLGILTFTN), and 185-207 (GTLFVAILSFLFGILVLFTGILG).

It is found in the cell membrane. This is an uncharacterized protein from Aquifex aeolicus (strain VF5).